Here is a 64-residue protein sequence, read N- to C-terminus: Large ribosomal subunit protein bL33 (64 aa).

Belongs to the bacterial ribosomal protein bL33 family.

The protein is Large ribosomal subunit protein bL33 of Thermosynechococcus vestitus (strain NIES-2133 / IAM M-273 / BP-1).